Reading from the N-terminus, the 108-residue chain is Iron-sulfur cluster assembly protein CyaY (108 aa).

It belongs to the frataxin family.

Functionally, involved in iron-sulfur (Fe-S) cluster assembly. May act as a regulator of Fe-S biogenesis. The polypeptide is Iron-sulfur cluster assembly protein CyaY (Burkholderia ambifaria (strain MC40-6)).